We begin with the raw amino-acid sequence, 364 residues long: V-type proton ATPase subunit d (364 aa).

The protein belongs to the V-ATPase V0D/AC39 subunit family. V-ATPase is a heteromultimeric enzyme composed of a peripheral catalytic V1 complex (components A to H) attached to an integral membrane V0 proton pore complex (components: a, c, c', c'', d, e, f and VOA1).

The protein localises to the vacuole membrane. Its function is as follows. Subunit of the V0 complex of vacuolar(H+)-ATPase (V-ATPase), a multisubunit enzyme composed of a peripheral complex (V1) that hydrolyzes ATP and a membrane integral complex (V0) that translocates protons. V-ATPase is responsible for acidifying and maintaining the pH of intracellular compartments. This subunit is a non-integral membrane component of the membrane pore domain and is required for proper assembly of the V0 sector. Might be involved in the regulated assembly of V1 subunits onto the membrane sector or alternatively may prevent the passage of protons through V0 pores. In Neurospora crassa (strain ATCC 24698 / 74-OR23-1A / CBS 708.71 / DSM 1257 / FGSC 987), this protein is V-type proton ATPase subunit d.